Consider the following 139-residue polypeptide: Putative nickel-responsive regulator (139 aa).

Ni(2+) contacts are provided by H79, H90, H92, and C98.

This sequence belongs to the transcriptional regulatory CopG/NikR family. It depends on Ni(2+) as a cofactor.

Transcriptional regulator. The polypeptide is Putative nickel-responsive regulator (Anaeromyxobacter dehalogenans (strain 2CP-1 / ATCC BAA-258)).